A 323-amino-acid chain; its full sequence is MFSSPDSPILHCLPRVAIIGAGRVGSTLAQRIAEKNLADVVLLDIVEGIPQGLALDLLEARGIELHNRQIIGTNNYADTSGSQIVVITAGFPRKPGMSRDDLLRTNAKIVIEAAKQAIAYSPYAIFIVVTNPLDVMTYLAWEATGLPRNRIMGMAGVLDSARFETFIALELGVLPADVKAMVLGSHGDLMVPLSRYATVNGIPITQLLDAVTIERLVERTRNGGAEIVELMQTGGAFFAPASATSLMVESILLNQSRLLPVSIYLQGEYDLKDVVIGVPCRLGLNGIESVIELNLSDSEREALHISAKSVQKNIERWRSLQNS.

NAD(+)-binding positions include 20–25 and D44; that span reads GAGRVG. Residues R93 and R99 each contribute to the substrate site. Residues N106 and 129 to 131 each bind NAD(+); that span reads VTN. Positions 131 and 162 each coordinate substrate. The Proton acceptor role is filled by H186.

It belongs to the LDH/MDH superfamily. MDH type 3 family.

It catalyses the reaction (S)-malate + NAD(+) = oxaloacetate + NADH + H(+). In terms of biological role, catalyzes the reversible oxidation of malate to oxaloacetate. The protein is Malate dehydrogenase of Nostoc sp. (strain PCC 7120 / SAG 25.82 / UTEX 2576).